Consider the following 235-residue polypeptide: Ribosomal RNA-processing protein 17 (235 aa).

Positions 49–110 (QRQKKAQEFI…AKNDKTEDLQ (62 aa)) form a coiled coil. Over residues 99–108 (EDAKNDKTED) the composition is skewed to basic and acidic residues. Disordered regions lie at residues 99–138 (EDAKNDKTEDLQVESDESWHGFDSDKDDGDNDNNESSVKP) and 209–235 (RVKKFRYLTKNERRINQRKANDNKRRR). 3 positions are modified to phosphoserine: S113, S116, and S122. Over residues 217 to 235 (TKNERRINQRKANDNKRRR) the composition is skewed to basic and acidic residues.

Belongs to the RRP17 family.

The protein resides in the nucleus. Its subcellular location is the nucleolus. Its function is as follows. Essential protein involved in ribosomal RNA processing. This Saccharomyces cerevisiae (strain ATCC 204508 / S288c) (Baker's yeast) protein is Ribosomal RNA-processing protein 17 (RRP17).